Consider the following 860-residue polypeptide: Protein argonaute-2 (860 aa).

Tyrosine 2 bears the 3'-nitrotyrosine mark. The region spanning 230–349 (PVIEFVCEVL…LPLEVCNIVA (120 aa)) is the PAZ domain. Residues 312–317 (YFKDRH) are interaction with guide RNA. A Phosphoserine modification is found at serine 388. A Piwi domain is found at 518–819 (LVVVILPGKT…VAFRARYHLV (302 aa)). The tract at residues 525–567 (GKTPVYAEVKRVGDTVLGMATQCVQMKNVQRTTPQTLSNLCLK) is interaction with guide RNA. The tract at residues 588 to 591 (FQQP) is interaction with GW182 family members. Aspartate 598 provides a ligand contact to a divalent metal cation. Positions 651–661 (LIQFYKSTRFK) are interaction with GW182 family members. Aspartate 670 is a binding site for a divalent metal cation. Position 701 is a 4-hydroxyproline (proline 701). Interaction with guide RNA stretches follow at residues 710–711 (KR), 754–762 (HAGIQGTSR), and 791–813 (YVRC…VAFR). Histidine 808 serves as a coordination point for a divalent metal cation. 4 positions are modified to phosphoserine: serine 825, serine 829, serine 832, and serine 835.

The protein belongs to the argonaute family. Ago subfamily. As to quaternary structure, interacts with DICER1 through its Piwi domain and with TARBP2 during assembly of the RNA-induced silencing complex (RISC). Together, DICER1, AGO2 and TARBP2 constitute the trimeric RISC loading complex (RLC), or micro-RNA (miRNA) loading complex (miRLC). Within the RLC/miRLC, DICER1 and TARBP2 are required to process precursor miRNAs (pre-miRNAs) to mature miRNAs and then load them onto AGO2. AGO2 bound to the mature miRNA constitutes the minimal RISC and may subsequently dissociate from DICER1 and TARBP2. Note however that the term RISC has also been used to describe the trimeric RLC/miRLC. The formation of RISC complexes containing siRNAs rather than miRNAs appears to occur independently of DICER1. Interacts with AGO1. Also interacts with DDB1, DDX5, DDX6, DDX20, DHX30, DHX36, DDX47, DHX9, ELAVL, FXR1, GEMIN4, HNRNPF, IGF2BP1, ILF3, IMP8, MATR3, PABPC1, PRMT5, P4HA1, P4HB, RBM4, SART3, TNRC6A, TNRC6B, UPF1 and YBX1. Interacts with the P-body components DCP1A and XRN1. Associates with polysomes and messenger ribonucleoproteins (mNRPs). Interacts with RBM4; the interaction is modulated under stress-induced conditions, occurs under both cell proliferation and differentiation conditions and in an RNA- and phosphorylation-independent manner. Interacts with LIMD1, WTIP and AJUBA. Interacts with TRIM71; the interaction increases in presence of RNA. Interacts with APOBEC3G in an RNA-dependent manner. Interacts with APOBEC3A, APOBEC3C, APOBEC3F and APOBEC3H. Interacts with DICER1, TARBP2, EIF6, MOV10 and RPL7A (60S ribosome subunit); they form a large RNA-induced silencing complex (RISC). Interacts with FMR1. Interacts with ZFP36. Interacts with RC3H1; the interaction is RNA independent. Found in a complex, composed of AGO2, CHD7 and ARB2A. Interacts with SND1 and SYT11. Interacts with CLNK. Interacts with GARRE1. Interacts with GRB2; this interaction is important for the formation of a ternary complex containing GRB2, AGO2 and DICER1. Mg(2+) serves as cofactor. It depends on Mn(2+) as a cofactor. Hydroxylated. 4-hydroxylation appears to enhance protein stability but is not required for miRNA-binding or endonuclease activity. In terms of processing, ubiquitinated on surface-exposed lysines by a SCF-like E3 ubiquitin-protein ligase complex containing ZSWIM8 during target-directed microRNA degradation (TDMD), a process that mediates degradation of microRNAs (miRNAs). Ubiquitination by the SCF-like E3 ubiquitin-protein ligase complex containing ZSWIM8 leads to its subsequent degradation, thereby exposing miRNAs for degradation. ZSWIM8 recognizes and binds AGO2 when it is engaged with a TDMD target. Post-translationally, phosphorylation at Ser-388 by AKT3; leads to up-regulate translational repression of microRNA target and down-regulate endonucleolytic cleavage. A phosphorylation cycle of C-terminal serine cluster (Ser-825-Ser-835) regulates the release of target mRNAs. Target-binding leads to phosphorylation of these residues by CSNK1A1, which reduces the affinity of AGO2 for mRNA and enables target release. The ANKRD52-PPP6C phosphatase complex dephosphorylates the residues, which primes AGO2 for binding a new target.

The protein resides in the cytoplasm. Its subcellular location is the P-body. It localises to the nucleus. The enzyme catalyses Endonucleolytic cleavage to 5'-phosphomonoester.. In terms of biological role, required for RNA-mediated gene silencing (RNAi) by the RNA-induced silencing complex (RISC). The 'minimal RISC' appears to include AGO2 bound to a short guide RNA such as a microRNA (miRNA) or short interfering RNA (siRNA). These guide RNAs direct RISC to complementary mRNAs that are targets for RISC-mediated gene silencing. The precise mechanism of gene silencing depends on the degree of complementarity between the miRNA or siRNA and its target. Binding of RISC to a perfectly complementary mRNA generally results in silencing due to endonucleolytic cleavage of the mRNA specifically by AGO2. Binding of RISC to a partially complementary mRNA results in silencing through inhibition of translation, and this is independent of endonuclease activity. May inhibit translation initiation by binding to the 7-methylguanosine cap, thereby preventing the recruitment of the translation initiation factor eIF4-E. May also inhibit translation initiation via interaction with EIF6, which itself binds to the 60S ribosomal subunit and prevents its association with the 40S ribosomal subunit. The inhibition of translational initiation leads to the accumulation of the affected mRNA in cytoplasmic processing bodies (P-bodies), where mRNA degradation may subsequently occur. In some cases RISC-mediated translational repression is also observed for miRNAs that perfectly match the 3' untranslated region (3'-UTR). Can also up-regulate the translation of specific mRNAs under certain growth conditions. Binds to the AU element of the 3'-UTR of the TNF (TNF-alpha) mRNA and up-regulates translation under conditions of serum starvation. Also required for transcriptional gene silencing (TGS), in which short RNAs known as antigene RNAs or agRNAs direct the transcriptional repression of complementary promoter regions. In Rattus norvegicus (Rat), this protein is Protein argonaute-2 (Ago2).